We begin with the raw amino-acid sequence, 509 residues long: Zinc finger CCCH-type with G patch domain-containing protein (509 aa).

The segment at 41-61 is disordered; it reads TRGSEPEATSDTKTPETSDNI. Polar residues predominate over residues 47 to 58; that stretch reads EATSDTKTPETS. A C3H1-type zinc finger spans residues 155–178; it reads PCNYFLEGECRFDEVRCRYSHGAL. Positions 254–278 are disordered; that stretch reads DDDLTSESEESNETDGSDAGNDSDM. One can recognise a G-patch domain in the interval 310-356; sequence TRGIGSKLMANMGYIHGTGLGSDGRGIVTPVSAQILPQGRSLDACME. The segment at 410–433 is disordered; sequence GSQQTENANKKTKPNNLQQHSNKT. The segment covering 423-433 has biased composition (polar residues); it reads PNNLQQHSNKT.

It is found in the nucleus. In terms of biological role, transcription repressor. In Drosophila mojavensis (Fruit fly), this protein is Zinc finger CCCH-type with G patch domain-containing protein.